Reading from the N-terminus, the 158-residue chain is 6,7-dimethyl-8-ribityllumazine synthase (158 aa).

5-amino-6-(D-ribitylamino)uracil contacts are provided by residues F24, 58–60 (AFE), and 82–84 (AVI). Residue 87–88 (GT) participates in (2S)-2-hydroxy-3-oxobutyl phosphate binding. The active-site Proton donor is H90. Residue F115 coordinates 5-amino-6-(D-ribitylamino)uracil. R129 provides a ligand contact to (2S)-2-hydroxy-3-oxobutyl phosphate.

This sequence belongs to the DMRL synthase family. As to quaternary structure, forms an icosahedral capsid composed of 60 subunits, arranged as a dodecamer of pentamers.

It carries out the reaction (2S)-2-hydroxy-3-oxobutyl phosphate + 5-amino-6-(D-ribitylamino)uracil = 6,7-dimethyl-8-(1-D-ribityl)lumazine + phosphate + 2 H2O + H(+). It participates in cofactor biosynthesis; riboflavin biosynthesis; riboflavin from 2-hydroxy-3-oxobutyl phosphate and 5-amino-6-(D-ribitylamino)uracil: step 1/2. Its function is as follows. Catalyzes the formation of 6,7-dimethyl-8-ribityllumazine by condensation of 5-amino-6-(D-ribitylamino)uracil with 3,4-dihydroxy-2-butanone 4-phosphate. This is the penultimate step in the biosynthesis of riboflavin. The polypeptide is 6,7-dimethyl-8-ribityllumazine synthase (Ectopseudomonas mendocina (strain ymp) (Pseudomonas mendocina)).